Reading from the N-terminus, the 682-residue chain is Potassium-transporting ATPase ATP-binding subunit (682 aa).

Transmembrane regions (helical) follow at residues 34-54 (PVMF…IAMA), 62-82 (ALFS…ANFA), 219-239 (IALT…TATL), and 254-274 (VLVA…LSAI). Catalysis depends on Asp-307, which acts as the 4-aspartylphosphate intermediate. ATP is bound by residues Asp-344, Glu-348, 377–384 (FTAQSRMS), and Lys-395. The Mg(2+) site is built by Asp-518 and Asp-522. 3 helical membrane-spanning segments follow: residues 588–608 (FAII…LNIM), 616–636 (AILS…PLAL), and 656–676 (IYGL…DLLL).

Belongs to the cation transport ATPase (P-type) (TC 3.A.3) family. Type IA subfamily. The system is composed of three essential subunits: KdpA, KdpB and KdpC.

It localises to the cell inner membrane. The enzyme catalyses K(+)(out) + ATP + H2O = K(+)(in) + ADP + phosphate + H(+). Part of the high-affinity ATP-driven potassium transport (or Kdp) system, which catalyzes the hydrolysis of ATP coupled with the electrogenic transport of potassium into the cytoplasm. This subunit is responsible for energy coupling to the transport system and for the release of the potassium ions to the cytoplasm. The protein is Potassium-transporting ATPase ATP-binding subunit of Escherichia coli (strain ATCC 8739 / DSM 1576 / NBRC 3972 / NCIMB 8545 / WDCM 00012 / Crooks).